The following is a 124-amino-acid chain: uncharacterized protein (124 aa).

Positions 44 to 92 (DRVENSGNGTGSISAPLTDLGPSIGDSHENKGADIPIHPPLDTQSHAKD) are disordered. The span at 48–58 (NSGNGTGSISA) shows a compositional bias: polar residues.

This is an uncharacterized protein from Caenorhabditis elegans.